The following is a 246-amino-acid chain: Adenosylcobinamide-GDP ribazoletransferase (246 aa).

A run of 7 helical transmembrane segments spans residues 30-50 (VNWYPAVGLVIGLLLWGVHQA), 51-71 (GLVLFSPWIAAILTLIAWVYV), 105-125 (VGAMGVLAAIMLLLIKAGAVA), 131-151 (GWGSFLIVAPVAARTHVLLSI), 167-189 (ISSGLSVSSIIVSYIIVFAAGWY), 193-210 (LQVMTAIFLSLLFALWFS), and 226-246 (GAVIESSEAVVLLVLVGSWWL).

It belongs to the CobS family. Requires Mg(2+) as cofactor.

It is found in the cell membrane. The catalysed reaction is alpha-ribazole + adenosylcob(III)inamide-GDP = adenosylcob(III)alamin + GMP + H(+). It catalyses the reaction alpha-ribazole 5'-phosphate + adenosylcob(III)inamide-GDP = adenosylcob(III)alamin 5'-phosphate + GMP + H(+). Its pathway is cofactor biosynthesis; adenosylcobalamin biosynthesis; adenosylcobalamin from cob(II)yrinate a,c-diamide: step 7/7. Functionally, joins adenosylcobinamide-GDP and alpha-ribazole to generate adenosylcobalamin (Ado-cobalamin). Also synthesizes adenosylcobalamin 5'-phosphate from adenosylcobinamide-GDP and alpha-ribazole 5'-phosphate. This chain is Adenosylcobinamide-GDP ribazoletransferase, found in Brevibacillus brevis (strain 47 / JCM 6285 / NBRC 100599).